The sequence spans 198 residues: Recombination protein RecR (198 aa).

The C4-type zinc-finger motif lies at 57-72; that stretch reads CDKCNTFTEAQICEVC. One can recognise a Toprim domain in the interval 80–175; it reads TLLCVVETPA…AVTRLARGVP (96 aa).

It belongs to the RecR family.

May play a role in DNA repair. It seems to be involved in an RecBC-independent recombinational process of DNA repair. It may act with RecF and RecO. The chain is Recombination protein RecR from Burkholderia multivorans (strain ATCC 17616 / 249).